Reading from the N-terminus, the 220-residue chain is Phosphoserine phosphatase (220 aa).

Catalysis depends on Asp-11, which acts as the Nucleophile. Residues Asp-11 and Asp-13 each contribute to the Mg(2+) site. Residue Asp-13 is the Proton donor of the active site. Residues Glu-20, Arg-56, 99–100, and Lys-144 each bind substrate; that span reads SG. Asp-167 serves as a coordination point for Mg(2+). Asn-170 provides a ligand contact to substrate.

The protein belongs to the HAD-like hydrolase superfamily. SerB family. The cofactor is Mg(2+).

It catalyses the reaction O-phospho-L-serine + H2O = L-serine + phosphate. The catalysed reaction is O-phospho-D-serine + H2O = D-serine + phosphate. Its pathway is amino-acid biosynthesis; L-serine biosynthesis; L-serine from 3-phospho-D-glycerate: step 3/3. This is Phosphoserine phosphatase from Idiomarina loihiensis (strain ATCC BAA-735 / DSM 15497 / L2-TR).